Here is a 369-residue protein sequence, read N- to C-terminus: Putative 2-aminoethylphosphonate import ATP-binding protein PhnT (369 aa).

The 232-residue stretch at 19–250 folds into the ABC transporter domain; sequence IVLDSLRVAY…PPNRFAAEFL (232 aa). 51 to 58 contributes to the ATP binding site; it reads GPSGSGKT.

This sequence belongs to the ABC transporter superfamily. 2-aminoethylphosphonate importer (TC 3.A.1.11.5) family.

It is found in the cell inner membrane. Its function is as follows. Probably part of the PhnSTUV complex (TC 3.A.1.11.5) involved in 2-aminoethylphosphonate import. Probably responsible for energy coupling to the transport system. This is Putative 2-aminoethylphosphonate import ATP-binding protein PhnT (phnT) from Salmonella typhi.